The primary structure comprises 365 residues: Probable L-tyrosine/L-aspartate decarboxylase (365 aa).

N6-(pyridoxal phosphate)lysine is present on Lys224.

Belongs to the group II decarboxylase family. MfnA subfamily. The cofactor is pyridoxal 5'-phosphate.

The catalysed reaction is L-tyrosine + H(+) = tyramine + CO2. It catalyses the reaction L-aspartate + H(+) = beta-alanine + CO2. It functions in the pathway cofactor biosynthesis; methanofuran biosynthesis. The protein operates within cofactor biosynthesis; coenzyme A biosynthesis. Functionally, catalyzes the decarboxylation of L-tyrosine to produce tyramine for methanofuran biosynthesis. Can also catalyze the decarboxylation of L-aspartate to produce beta-alanine for coenzyme A (CoA) biosynthesis. This Methanoregula boonei (strain DSM 21154 / JCM 14090 / 6A8) protein is Probable L-tyrosine/L-aspartate decarboxylase.